A 396-amino-acid polypeptide reads, in one-letter code: L-lactate dehydrogenase (396 aa).

One can recognise an FMN hydroxy acid dehydrogenase domain in the interval 1–380 (MIISAASDYR…SGDSLVQELG (380 aa)). Substrate is bound at residue Tyr24. 2 residues coordinate FMN: Ser106 and Gln127. Tyr129 provides a ligand contact to substrate. Residue Thr155 coordinates FMN. Arg164 is a binding site for substrate. Lys251 is an FMN binding site. His275 (proton acceptor) is an active-site residue. Arg278 provides a ligand contact to substrate. Residue 306-330 (DSGIRNGLDVVRMIALGADTVLLGR) coordinates FMN.

The protein belongs to the FMN-dependent alpha-hydroxy acid dehydrogenase family. It depends on FMN as a cofactor.

Its subcellular location is the cell inner membrane. The catalysed reaction is (S)-lactate + A = pyruvate + AH2. Its function is as follows. Catalyzes the conversion of L-lactate to pyruvate. Is coupled to the respiratory chain. The polypeptide is L-lactate dehydrogenase (Salmonella typhimurium (strain LT2 / SGSC1412 / ATCC 700720)).